A 360-amino-acid chain; its full sequence is MRIKEHLKQLKPYQPGKPIEAVKSEYGLDKVVKLASNENPYGCSEAAKEALHHEIQQLALYPDGYSAALRTRLSKHLNVSETSLIFGNGSDEIIQIICRAFLNNKTNTITAAPTFPQYKHNAVIEGAEVREIALRPDGSHDLDAMLEAIDEQTQVVWICSPNNPTGTYTSEGELLAFLERVPSRVLVVLDEAYYEYVTAEDYPETVPLLSKYSNLMILRTFSKAYGLAALRVGYGIADENLIRQIEPAREPFNTSRLGQAAAIAALDDQAFIASCVEQNNAGLQQYYDFAKTHGLKCYPSQTNFVLIDFKRPADELFQALLEKGYIVRSGNALGFPTSLRITIGTKEQNEEILAILAEIL.

The residue at position 223 (K223) is an N6-(pyridoxal phosphate)lysine.

The protein belongs to the class-II pyridoxal-phosphate-dependent aminotransferase family. Histidinol-phosphate aminotransferase subfamily. Homodimer. The cofactor is pyridoxal 5'-phosphate.

The catalysed reaction is L-histidinol phosphate + 2-oxoglutarate = 3-(imidazol-4-yl)-2-oxopropyl phosphate + L-glutamate. The protein operates within amino-acid biosynthesis; L-histidine biosynthesis; L-histidine from 5-phospho-alpha-D-ribose 1-diphosphate: step 7/9. In Bacillus subtilis subsp. natto, this protein is Histidinol-phosphate aminotransferase.